The sequence spans 512 residues: Inositol-3-phosphate synthase (512 aa).

Residues Gly72, Gly73, Asn74, Asn75, Asp145, Ile182, Gln192, Arg195, Thr232, Gly233, Asn234, Thr235, Gly283, Ser284, Asp308, Ser311, Asn342, Asn343, Asp344, Lys357, Gly395, Asp396, Asp424, and Ser425 each contribute to the NAD(+) site.

It belongs to the myo-inositol 1-phosphate synthase family. Requires NAD(+) as cofactor.

The protein resides in the cytoplasm. It is found in the cytosol. It localises to the nucleus. The enzyme catalyses D-glucose 6-phosphate = 1D-myo-inositol 3-phosphate. The protein operates within polyol metabolism; myo-inositol biosynthesis; myo-inositol from D-glucose 6-phosphate: step 1/2. Its function is as follows. Key enzyme in myo-inositol biosynthesis pathway that catalyzes the conversion of glucose 6-phosphate to 1-myo-inositol 1-phosphate in a NAD-dependent manner. The chain is Inositol-3-phosphate synthase from Mesembryanthemum crystallinum (Common ice plant).